The primary structure comprises 216 residues: U1 small nuclear ribonucleoprotein A (216 aa).

RRM domains lie at 7 to 86 and 142 to 216; these read QTIY…YSKS and QILF…FAKK. The segment at 97-142 is disordered; it reads TFKERPKKVKPPKPAPGTDEKKDKKKKPSSAENSNPNAQTEQPPNQ. Residues 126–142 show a composition bias toward polar residues; it reads SAENSNPNAQTEQPPNQ.

Belongs to the RRM U1 A/B'' family. Belongs to the spliceosome where it is associated with snRNP U1. Interacts with the SMN complex.

The protein localises to the nucleus. Binds stem loop II of U1 snRNA. It is the first snRNP to interact with pre-mRNA. This interaction is required for the subsequent binding of U2 snRNP and the U4/U6/U5 tri-snRNP. Plays a role in regulating sex-lethal splicing. In Drosophila melanogaster (Fruit fly), this protein is U1 small nuclear ribonucleoprotein A (snf).